A 244-amino-acid chain; its full sequence is MSAVEISPDVLVYKSPLTEQSTEYASISNNSDQTIAFKVKTTAPKFYCVRPNAAVVAPGETIQVQVIFLGLTEEPAADFKCRDKFLVITLPSPYDLNGKAVADVWSDLEAEFKQQAISKKIKVKYLISPDVHPAQNQNIQENKETVEPVVQDSEPKEVPAVVNEKEVPAEPETQPPVQVKKEEVPPVVQKTVPHENEKQTSNSTPAPQNQIKEAATVPAENESSSMGIFILVALLILVLGWFYR.

An N-acetylserine modification is found at serine 2. Topologically, residues 2–222 (SAVEISPDVL…EAATVPAENE (221 aa)) are cytoplasmic. One can recognise an MSP domain in the interval 3 to 126 (AVEISPDVLV…ISKKIKVKYL (124 aa)). At serine 106 the chain carries Phosphoserine. Positions 135–219 (QNQNIQENKE…QIKEAATVPA (85 aa)) are disordered. The span at 153–168 (SEPKEVPAVVNEKEVP) shows a compositional bias: basic and acidic residues. Over residues 199–211 (QTSNSTPAPQNQI) the composition is skewed to polar residues. Residues 223-243 (SSSMGIFILVALLILVLGWFY) traverse the membrane as a helical; Anchor for type IV membrane protein segment. Arginine 244 is a topological domain (lumenal).

This sequence belongs to the VAMP-associated protein (VAP) (TC 9.B.17) family. In terms of assembly, interacts with OPI1. Also interacts with PBI1. Interacts with EPO1.

The protein localises to the endoplasmic reticulum membrane. The protein resides in the nucleus membrane. Functionally, acts as an endoplasmic reticulum (ER) membrane anchor for cytoplasmic proteins via binding to the FFAT motif of targeted proteins. Regulates phospholipid biosynthesis by modulating the subcellular localization of the transcriptional repressor OPI1. Also contributes to the tethering of the ER to the plasma membrane. Allows interorganelle phosphatidylserine (PtdSer) transport via a process that involves the acceptor membrane complex PDR17-PDS2 that binds to PBI1 which in turn ligates to SCS2 and phosphatidic acid present in the donor membrane, forming a zone of apposition that facilitates PtdSer transfer. This chain is Vesicle-associated membrane protein-associated protein SCS2, found in Saccharomyces cerevisiae (strain ATCC 204508 / S288c) (Baker's yeast).